Consider the following 375-residue polypeptide: tRNA (guanine(26)-N(2))-dimethyltransferase (375 aa).

The Trm1 methyltransferase domain occupies 2 to 368; that stretch reads KYITEGNTKL…AKLIDIVEFI (367 aa). Arg-35, Arg-66, Asp-89, Asp-116, and Ala-117 together coordinate S-adenosyl-L-methionine.

This sequence belongs to the class I-like SAM-binding methyltransferase superfamily. Trm1 family.

It carries out the reaction guanosine(26) in tRNA + 2 S-adenosyl-L-methionine = N(2)-dimethylguanosine(26) in tRNA + 2 S-adenosyl-L-homocysteine + 2 H(+). In terms of biological role, dimethylates a single guanine residue at position 26 of a number of tRNAs using S-adenosyl-L-methionine as donor of the methyl groups. The protein is tRNA (guanine(26)-N(2))-dimethyltransferase of Methanococcus aeolicus (strain ATCC BAA-1280 / DSM 17508 / OCM 812 / Nankai-3).